The sequence spans 469 residues: ATP sulfurylase 4, chloroplastic (469 aa).

A chloroplast-targeting transit peptide spans 1–51 (MASSAAAIVSGSPFRSSPLIHNHHASRYAPGSISVVSLPRQVSRRGLSVKS).

This sequence belongs to the sulfate adenylyltransferase family. As to quaternary structure, homotetramer. In terms of tissue distribution, expressed in roots and leaves.

The protein localises to the plastid. It localises to the chloroplast stroma. The catalysed reaction is sulfate + ATP + H(+) = adenosine 5'-phosphosulfate + diphosphate. Its pathway is sulfur metabolism; hydrogen sulfide biosynthesis; sulfite from sulfate: step 1/3. Its function is as follows. Sulfate adenylyltransferase. Catalyzes the first step of the sulfate assimilation pathway. This is ATP sulfurylase 4, chloroplastic (APS4) from Arabidopsis thaliana (Mouse-ear cress).